Consider the following 136-residue polypeptide: Invertebrate-type lysozyme (136 aa).

The first 11 residues, 1–11 (METVSVEEGLD), serve as a signal peptide directing secretion. The region spanning 14–130 (PGMVSQKCLL…WELLQKIPGC (117 aa)) is the I-type lysozyme domain. Cystine bridges form between Cys21–Cys98, Cys24–Cys130, Cys26–Cys33, Cys38–Cys47, Cys60–Cys80, Cys70–Cys76, and Cys94–Cys112. The active-site Proton donor is Glu29. Asp41 (nucleophile) is an active-site residue. 53–59 (KQPYWID) contributes to the substrate binding site. N-linked (GlcNAc...) asparagine glycosylation occurs at Asn75. Substrate-binding positions include Tyr84, Tyr92, 105-107 (HNG), and Lys119.

As to quaternary structure, homodimer in its autoinhibited state. Active as monomer.

The protein resides in the secreted. The catalysed reaction is Hydrolysis of (1-&gt;4)-beta-linkages between N-acetylmuramic acid and N-acetyl-D-glucosamine residues in a peptidoglycan and between N-acetyl-D-glucosamine residues in chitodextrins.. With respect to regulation, chitinase activity is activated by high salt concentrations which cause the release of the monomer from the autoinhibited homodimer. In terms of biological role, bacteriolytic activity against Gram-positive bacterium M.luteus and thereby probably protects against bacterial infection. Also has chitinase activity. May act as an ispopeptidase, cleaving isopeptide bonds between the side chains of Lys and Gln residues in proteins or in the cross-linking peptide of peptidoglycan in bacterial cell walls. The protein is Invertebrate-type lysozyme of Ruditapes philippinarum (Japanese carpet shell).